A 1400-amino-acid polypeptide reads, in one-letter code: Clustered mitochondria protein homolog (1400 aa).

Disordered stretches follow at residues Met-1–Ser-39, Gly-56–Asp-78, and Gly-212–Pro-243. A compositionally biased stretch (basic and acidic residues) spans Gly-56–Gly-69. Positions Arg-380 to Leu-622 constitute a Clu domain. Residues Ala-684 to Ala-741 are disordered. A compositionally biased stretch (low complexity) spans Asp-707–Pro-722. Residues Ala-727–Ala-741 are compositionally biased toward polar residues. TPR repeat units follow at residues Ala-1088–Val-1121, Cys-1130–Val-1163, Ile-1172–Val-1205, and Ala-1214–Tyr-1247. Over residues Gln-1377–Ser-1388 the composition is skewed to polar residues. Positions Gln-1377–Asp-1400 are disordered. Positions Leu-1390–Asp-1400 are enriched in basic and acidic residues.

Belongs to the CLU family.

It localises to the cytoplasm. Functionally, mRNA-binding protein involved in proper cytoplasmic distribution of mitochondria. The sequence is that of Clustered mitochondria protein homolog from Danio rerio (Zebrafish).